The sequence spans 233 residues: Probable transglycosylase IsaA (233 aa).

The N-terminal stretch at 1-29 (MKKTIMASSLAVALGVTGYAAGTGHQAHA) is a signal peptide.

It belongs to the transglycosylase family. IsaA subfamily.

It localises to the secreted. In terms of biological role, is able to cleave peptidoglycan. The polypeptide is Probable transglycosylase IsaA (isaA) (Staphylococcus aureus (strain Mu3 / ATCC 700698)).